The sequence spans 120 residues: MRSWIPLLVLFAVLAVFAQAGKSSESDESRRRPSKSSESSDSDSKSSDSDSSSSEESSGDVPSEAPNTDSTPVEILAAAKPDSGILLGPGDNRVKRDGLPSFYDIRKKRGLPSAYDIRRK.

Residues 1–18 (MRSWIPLLVLFAVLAVFA) form the signal peptide. The disordered stretch occupies residues 20–99 (AGKSSESDES…GDNRVKRDGL (80 aa)).

This is an uncharacterized protein from Caenorhabditis elegans.